The sequence spans 431 residues: Serine/threonine-protein kinase SSN3 (431 aa).

A Protein kinase domain is found at Tyr-27–Phe-355. Residues Ile-33–Val-41 and Lys-59 each bind ATP. Asp-174 acts as the Proton acceptor in catalysis. A disordered region spans residues Arg-397 to Arg-431. Low complexity predominate over residues Asn-407–Asn-424.

The protein belongs to the protein kinase superfamily. CMGC Ser/Thr protein kinase family. CDC2/CDKX subfamily. In terms of assembly, component of the srb8-11 complex, a regulatory module of the Mediator complex. Requires Mg(2+) as cofactor.

It is found in the nucleus. The catalysed reaction is L-seryl-[protein] + ATP = O-phospho-L-seryl-[protein] + ADP + H(+). The enzyme catalyses L-threonyl-[protein] + ATP = O-phospho-L-threonyl-[protein] + ADP + H(+). It catalyses the reaction [DNA-directed RNA polymerase] + ATP = phospho-[DNA-directed RNA polymerase] + ADP + H(+). Component of the srb8-11 complex. The srb8-11 complex is a regulatory module of the Mediator complex which is itself dependent transcription. The srb8-11 complex may be involved in the transcriptional repression of a subset of genes regulated by Mediator. It may inhibit the association of the Mediator complex with RNA polymerase II to form the holoenzyme complex. The srb8-11 complex phosphorylates the C-terminal domain (CTD) of the largest subunit of RNA polymerase II. The polypeptide is Serine/threonine-protein kinase SSN3 (SSN3) (Scheffersomyces stipitis (strain ATCC 58785 / CBS 6054 / NBRC 10063 / NRRL Y-11545) (Yeast)).